Reading from the N-terminus, the 322-residue chain is CMP-sialic acid transporter 1 (322 aa).

Topologically, residues 1–2 are cytoplasmic; that stretch reads MQ. The helical transmembrane segment at 3–23 threads the bilayer; the sequence is WYLVAALLTVLTSSQGILTTL. At 24–33 the chain is on the lumenal side; it reads SQSNGKYKYD. The chain crosses the membrane as a helical span at residues 34–54; that stretch reads YATIPFLAELFKLSFSSFFLW. Residues 55-75 are Cytoplasmic-facing; the sequence is KECQSSSPPRMTKEWRSIRLY. The helical transmembrane segment at 76 to 96 threads the bilayer; it reads LVPSVIYLIHNNVQFATLTYV. Residues 97–100 lie on the Lumenal side of the membrane; that stretch reads DPST. A helical membrane pass occupies residues 101–120; the sequence is YQIMGNLKIVTTGILFRLVL. The Cytoplasmic portion of the chain corresponds to 121–126; sequence KRKLSN. A helical membrane pass occupies residues 127 to 144; that stretch reads LQWMAVVLLAVGTTTSQV. Over 145–157 the chain is Lumenal; it reads KGCGDAPCDSLFS. Residues 158–178 traverse the membrane as a helical segment; it reads APFQGYMLGILSACLSALAGV. Residues 179-198 lie on the Cytoplasmic side of the membrane; the sequence is YTEYLMKKNNDSLYWQNVQL. A helical membrane pass occupies residues 199-219; sequence YTFGVIFNMGWLIYGDFKAGF. The Lumenal portion of the chain corresponds to 220-233; it reads ERGPWWQRLFNGYS. A helical transmembrane segment spans residues 234 to 254; that stretch reads ITTWMVVFNLGSTGLLVSWLM. At 255-262 the chain is on the cytoplasmic side; it reads KYSDNIVK. A helical transmembrane segment spans residues 263–283; it reads VYSTSMGMLLTMVLSVYLFNV. The Lumenal segment spans residues 284–286; that stretch reads RAT.

This sequence belongs to the nucleotide-sugar transporter family. CMP-Sialate:CMP antiporter (TC 2.A.7.12) subfamily.

The protein localises to the golgi apparatus membrane. Functionally, sugar transporter involved in the transport of CMP-sialic acid from the cytoplasm into the Golgi. May transport important nucleotide sugars such as CMP-Kdo (2-keto-3-deoxy-D-manno-octulosonic acid) in physiological conditions. This Oryza sativa subsp. indica (Rice) protein is CMP-sialic acid transporter 1.